We begin with the raw amino-acid sequence, 31 residues long: Photosystem II reaction center protein T (31 aa).

The residue at position 1 (methionine 1) is an N-formylmethionine. Residues 3–23 (SVAYILVLTMALAVLFFAIAF) form a helical membrane-spanning segment.

It belongs to the PsbT family. In terms of assembly, PSII is composed of 1 copy each of membrane proteins PsbA, PsbB, PsbC, PsbD, PsbE, PsbF, PsbH, PsbI, PsbJ, PsbK, PsbL, PsbM, PsbT, PsbX, PsbY, PsbZ, Psb30/Ycf12, peripheral proteins PsbO, CyanoQ (PsbQ), PsbU, PsbV and a large number of cofactors. It forms dimeric complexes.

The protein localises to the cellular thylakoid membrane. Found at the monomer-monomer interface of the photosystem II (PS II) dimer, plays a role in assembly and dimerization of PSII. PSII is a light-driven water plastoquinone oxidoreductase, using light energy to abstract electrons from H(2)O, generating a proton gradient subsequently used for ATP formation. The protein is Photosystem II reaction center protein T of Synechocystis sp. (strain ATCC 27184 / PCC 6803 / Kazusa).